The following is a 457-amino-acid chain: Hydrogenobyrinate a,c-diamide synthase (457 aa).

The GATase cobBQ-type domain maps to 255–441 (TVAIAAGRAF…LHTHPAATPG (187 aa)). Residue cysteine 337 is the Nucleophile of the active site.

Belongs to the CobB/CbiA family. It depends on Mg(2+) as a cofactor.

It catalyses the reaction hydrogenobyrinate + 2 L-glutamine + 2 ATP + 2 H2O = hydrogenobyrinate a,c-diamide + 2 L-glutamate + 2 ADP + 2 phosphate + 2 H(+). Its pathway is cofactor biosynthesis; adenosylcobalamin biosynthesis; cob(II)yrinate a,c-diamide from precorrin-2 (aerobic route): step 9/10. Functionally, catalyzes the ATP-dependent amidation of the two carboxylate groups at positions a and c of hydrogenobyrinate, using either L-glutamine or ammonia as the nitrogen source. The polypeptide is Hydrogenobyrinate a,c-diamide synthase (Mycobacterium bovis (strain ATCC BAA-935 / AF2122/97)).